The primary structure comprises 1129 residues: Regulator of nonsense transcripts 1 (1129 aa).

The sufficient for interaction with RENT2 stretch occupies residues 1-415; sequence MSVEAYGPSS…LRSSVGAPVE (415 aa). Phosphoserine occurs at positions 10 and 31. The disordered stretch occupies residues 39 to 70; that stretch reads TLPSQTQTPPGGPGGPGGGGAGGPGGAGAGAA. A compositionally biased stretch (gly residues) spans 52–69; the sequence is GGPGGGGAGGPGGAGAGA. The region spanning 115 to 272 is the Upf1 CH-rich domain; the sequence is TKDLPIHACS…NKLEELWKEN (158 aa). Residues C123, C126, C137, S140, C145, H155, H159, C165, C183, C186, C209, and C213 each coordinate Zn(2+). Positions 123–155 are C3H; the sequence is CSYCGIHDPACVVYCNTSKKWFCNGRGNTSGSH. Residues 137-165 are CC/SHH/C; that stretch reads CNTSKKWFCNGRGNTSGSHIVNHLVRAKC. Residues 183–213 are C4; sequence CYNCGCRNVFLLGFIPAKADSVVVLLCRQPC. ATP is bound by residues Q486 and 506-510; that span reads GTGKT. At S565 the chain carries Phosphoserine. Q676, Y713, and E844 together coordinate ATP. Residue S956 is modified to Phosphoserine. Disordered stretches follow at residues 1009–1058 and 1073–1096; these read FGQA…VASQ and SQPSQMSQPGLSQPELSQDSYLGD. Omega-N-methylarginine is present on R1019. Over residues 1025–1034 the composition is skewed to basic residues; the sequence is KTGRGGRQKN. Positions 1041–1058 are enriched in polar residues; it reads PSQTNLPNSQASQDVASQ. A compositionally biased stretch (low complexity) spans 1073 to 1086; that stretch reads SQPSQMSQPGLSQP. 4 positions are modified to phosphoserine: S1089, S1107, S1110, and S1127. Short sequence motifs ([ST]-Q motif) lie at residues 1089-1090 and 1107-1108; these read SQ. The tract at residues 1110–1129 is disordered; the sequence is STYQGERAYQHGGVTGLSQY.

This sequence belongs to the DNA2/NAM7 helicase family. In terms of assembly, found in a post-splicing messenger ribonucleoprotein (mRNP) complex. Associates with the exon junction complex (EJC). Associates with the SGM1C complex; is phosphorylated by the complex kinase component SGM1. Part of a complex composed of SMG1, DHX34 and UPF1; within the complex DHX34 acts as a scaffolding protein to facilitate SMG1 phosphorylation of UPF1. Interacts with UPF2. Interacts with UPF3A and UPF3B. Interacts with EST1A. Interacts with SLBP. Interacts (when hyperphosphorylated) with PNRC2. Interacts with AGO1 and AGO2. Interacts with GSPT2. Interacts with isoform 1 and isoform 5 of ADAR/ADAR1. Interacts with SMG7. Interacts with ZC3H12A; this interaction occurs in a mRNA translationally active- and termination-dependent manner and is essential for ZC3H12A-mediated degradation of target mRNAs. Interacts with CPSF6. Interacts with MOV10; the interaction is direct and RNA-dependent. Interacts with SHFL; the interaction increases in the presence of RNA. Interacts with UPF2 and DDX4; interactions are mediated by TDRD6. Interacts with DHX34 and PABPC1/PABP1; the interactions are RNA-independent. Interacts with RBM46. As to quaternary structure, (Microbial infection) Interacts with human T-cell leukemia virus 1/HTLV-1 protein Tax; this interaction inhibits the host nonsense-mediated mRNA decay (NMD). In terms of processing, phosphorylated by SMG1; required for formation of mRNA surveillance complexes. Ubiquitous.

The protein resides in the cytoplasm. The protein localises to the P-body. It is found in the nucleus. Its subcellular location is the perinuclear region. The catalysed reaction is ATP + H2O = ADP + phosphate + H(+). RNA-dependent helicase required for nonsense-mediated decay (NMD) of aberrant mRNAs containing premature stop codons and modulates the expression level of normal mRNAs. Is recruited to mRNAs upon translation termination and undergoes a cycle of phosphorylation and dephosphorylation; its phosphorylation appears to be a key step in NMD. Recruited by release factors to stalled ribosomes together with the SMG1C protein kinase complex to form the transient SURF (SMG1-UPF1-eRF1-eRF3) complex. In EJC-dependent NMD, the SURF complex associates with the exon junction complex (EJC) (located 50-55 or more nucleotides downstream from the termination codon) through UPF2 and allows the formation of an UPF1-UPF2-UPF3 surveillance complex which is believed to activate NMD. Phosphorylated UPF1 is recognized by EST1B/SMG5, SMG6 and SMG7 which are thought to provide a link to the mRNA degradation machinery involving exonucleolytic and endonucleolytic pathways, and to serve as adapters to protein phosphatase 2A (PP2A), thereby triggering UPF1 dephosphorylation and allowing the recycling of NMD factors. UPF1 can also activate NMD without UPF2 or UPF3, and in the absence of the NMD-enhancing downstream EJC indicative for alternative NMD pathways. Plays a role in replication-dependent histone mRNA degradation at the end of phase S; the function is independent of UPF2. For the recognition of premature termination codons (PTC) and initiation of NMD a competitive interaction between UPF1 and PABPC1 with the ribosome-bound release factors is proposed. The ATPase activity of UPF1 is required for disassembly of mRNPs undergoing NMD. Together with UPF2 and dependent on TDRD6, mediates the degradation of mRNA harboring long 3'UTR by inducing the NMD machinery. Also capable of unwinding double-stranded DNA and translocating on single-stranded DNA. This Homo sapiens (Human) protein is Regulator of nonsense transcripts 1.